The sequence spans 859 residues: Volume-regulated anion channel subunit LRRC8D (859 aa).

Topologically, residues 1–22 (MFTLAEVASLNDIQPTYRILKP) are cytoplasmic. The chain crosses the membrane as a helical span at residues 23 to 48 (WWDVFMDYLAVVMLMVAIFAGTMQLT). The Extracellular portion of the chain corresponds to 49 to 164 (KDQVVCLPVL…YHLALPWYSK (116 aa)). Cysteines 54 and 355 form a disulfide. Residues 110 to 138 (IPLQATHPHAESTLPNQEAKKEKRDPTGR) form a disordered region. Residues 127–138 (EAKKEKRDPTGR) show a composition bias toward basic and acidic residues. A helical membrane pass occupies residues 165-183 (YFPYLALIHTIILMVSSNF). Residues 184–309 (WFKYPKTCSK…EDSDLIYKLY (126 aa)) lie on the Cytoplasmic side of the membrane. Positions 222–252 (SEENKQRITGAQTLPKHVSTSSDEGSPSAST) are disordered. A compositionally biased stretch (polar residues) spans 228–252 (RITGAQTLPKHVSTSSDEGSPSAST). Phosphoserine occurs at positions 242, 243, and 247. The chain crosses the membrane as a helical span at residues 310–331 (VVQTLIKTAKFIFILCYTANFV). The Extracellular portion of the chain corresponds to 332 to 361 (NAISFEHVCKPKVEHLTGYEVFECTHNMAY). Residues 362-387 (MLKKLLISYISIICVYGFICLYTLFW) traverse the membrane as a helical segment. Residues 388–859 (LFRIPLKEYS…DVNVPFANGI (472 aa)) lie on the Cytoplasmic side of the membrane. LRR repeat units follow at residues 515–535 (NLQE…AFSF), 539–560 (HLRC…VYLL), 562–583 (NLRE…IGLE), 590–610 (HLKI…ITDV), 613–633 (HLTK…NSLK), 637–658 (NVAE…IFSL), 660–681 (NLQE…ISFQ), 685–706 (RLTC…ITHV), 708–729 (NLES…VFSL), 731–752 (KLRC…IGLL), 754–775 (NLQH…LFKC), 777–798 (KLRT…ISQL), and 800–821 (QLTQ…LGQC).

Belongs to the LRRC8 family. Heterohexamer; oligomerizes with other LRRC8 proteins (LRRC8A, LRRC8B, LRRC8C and/or LRRC8E) to form a heterohexamer. In vivo, the subunit composition may depend primarily on expression levels, and heterooligomeric channels containing various proportions of the different LRRC8 proteins may coexist. Expressed in pancreatic beta cells. Also expressed in glucagon-secreting pancreatic alpha cells.

It is found in the cell membrane. Its subcellular location is the endoplasmic reticulum membrane. It carries out the reaction chloride(in) = chloride(out). It catalyses the reaction iodide(out) = iodide(in). The catalysed reaction is taurine(out) = taurine(in). Its function is as follows. Non-essential component of the volume-regulated anion channel (VRAC, also named VSOAC channel), an anion channel required to maintain a constant cell volume in response to extracellular or intracellular osmotic changes. The VRAC channel conducts iodide better than chloride and can also conduct organic osmolytes like taurine. Plays a redundant role in the efflux of amino acids, such as aspartate, in response to osmotic stress family member (LRRC8B, LRRC8C, LRRC8D or LRRC8E); channel characteristics depend on the precise subunit composition. Also acts as a regulator of glucose-sensing in pancreatic beta cells: VRAC currents, generated in response to hypotonicity- or glucose-induced beta cell swelling, depolarize cells, thereby causing electrical excitation, leading to increase glucose sensitivity and insulin secretion. VRAC channels containing LRRC8D inhibit transport of immunoreactive cyclic dinucleotide GMP-AMP (2'-3'-cGAMP), an immune messenger produced in response to DNA virus in the cytosol. The polypeptide is Volume-regulated anion channel subunit LRRC8D (Mus musculus (Mouse)).